Consider the following 29-residue polypeptide: Cyclotide mden-B (29 aa).

A cross-link (cyclopeptide (Gly-Asn)) is located at residues Gly1–Asn29. Intrachain disulfides connect Cys5-Cys19, Cys9-Cys21, and Cys14-Cys26.

This sequence belongs to the cyclotide family. Moebius subfamily. This is a cyclic peptide.

In terms of biological role, probably participates in a plant defense mechanism. The polypeptide is Cyclotide mden-B (Melicytus dentatus (Tree violet)).